Reading from the N-terminus, the 192-residue chain is Orotate phosphoribosyltransferase (192 aa).

5-phospho-alpha-D-ribose 1-diphosphate-binding positions include R102, K103, K106, and 129-137 (EDVVTTGRS). Orotate is bound by residues T133 and R161.

It belongs to the purine/pyrimidine phosphoribosyltransferase family. PyrE subfamily. In terms of assembly, homodimer. Mg(2+) serves as cofactor.

It carries out the reaction orotidine 5'-phosphate + diphosphate = orotate + 5-phospho-alpha-D-ribose 1-diphosphate. It functions in the pathway pyrimidine metabolism; UMP biosynthesis via de novo pathway; UMP from orotate: step 1/2. In terms of biological role, catalyzes the transfer of a ribosyl phosphate group from 5-phosphoribose 1-diphosphate to orotate, leading to the formation of orotidine monophosphate (OMP). This chain is Orotate phosphoribosyltransferase, found in Prochlorococcus marinus (strain SARG / CCMP1375 / SS120).